We begin with the raw amino-acid sequence, 758 residues long: Vitamin K-dependent gamma-carboxylase (758 aa).

The tract at residues 1–29 (MAVHRGSARAAPASDKVQKNKPAQTSGLE) is disordered. Ala-2 carries the post-translational modification N-acetylalanine. Over 2–60 (AVHRGSARAAPASDKVQKNKPAQTSGLEQGSRMARIFGFEWADLSSWQSVVTLLNRPTD) the chain is Cytoplasmic. Residues 61 to 81 (PANLAVFRFLFAFLMLLDIPQ) traverse the membrane as a helical segment. Residues 82–113 (ERGLSSLDRKYLDGLDVCRFPLLDALRPLPLD) are Lumenal-facing. Cys-99 and Cys-450 form a disulfide bridge. A helical transmembrane segment spans residues 114–134 (WMYLVYTIMFLGALGMMLGLW). At 135–136 (YR) the chain is on the cytoplasmic side. Residues 137 to 157 (LSCMLFLLPYWYVFLLDKTSW) form a helical membrane-spanning segment. Residues 158 to 292 (NNHSYLYGLL…VSYFHCMNSQ (135 aa)) lie on the Lumenal side of the membrane. A helical transmembrane segment spans residues 293–313 (LFSIGMFPYVMLASSPLFCSA). Residues 314-361 (EWPRKLVARCPKRLQELLPAKAAPRPSASCVYKRARAKAGQKPGLRHH) are Cytoplasmic-facing. The helical transmembrane segment at 362 to 382 (LGTVFTLLYLLEQLFLPYSHF) threads the bilayer. At 383–758 (LTQGYNNWTN…PDSEHVHSEL (376 aa)) the chain is on the lumenal side. The disordered stretch occupies residues 727 to 758 (PFEPVDESSASNTDSSDPHPSEPDSEHVHSEL). The span at 742 to 758 (SDPHPSEPDSEHVHSEL) shows a compositional bias: basic and acidic residues.

It belongs to the vitamin K-dependent gamma-carboxylase family. Monomer. Interacts with CALU.

The protein localises to the endoplasmic reticulum membrane. The catalysed reaction is 4-carboxy-L-glutamyl-[protein] + 2,3-epoxyphylloquinone + H2O + H(+) = phylloquinol + L-glutamyl-[protein] + CO2 + O2. Mediates the vitamin K-dependent carboxylation of glutamate residues to calcium-binding gamma-carboxyglutamate (Gla) residues with the concomitant conversion of the reduced hydroquinone form of vitamin K to vitamin K epoxide. Catalyzes gamma-carboxylation of various proteins, such as blood coagulation factors (F2, F7, F9 and F10), osteocalcin (BGLAP) or matrix Gla protein (MGP). This Rattus norvegicus (Rat) protein is Vitamin K-dependent gamma-carboxylase (Ggcx).